A 250-amino-acid chain; its full sequence is Probable septum site-determining protein MinC (250 aa).

The interval 110–143 (SGARERPLEPEPEVVKKPEPAPAPPPPPEPEVRP) is disordered. The segment covering 112–128 (ARERPLEPEPEVVKKPE) has biased composition (basic and acidic residues). Over residues 129–138 (PAPAPPPPPE) the composition is skewed to pro residues.

The protein belongs to the MinC family. In terms of assembly, interacts with MinD and FtsZ.

Functionally, cell division inhibitor that blocks the formation of polar Z ring septums. Rapidly oscillates between the poles of the cell to destabilize FtsZ filaments that have formed before they mature into polar Z rings. Prevents FtsZ polymerization. In Pseudomonas putida (strain ATCC 47054 / DSM 6125 / CFBP 8728 / NCIMB 11950 / KT2440), this protein is Probable septum site-determining protein MinC.